A 249-amino-acid chain; its full sequence is Probable transcriptional regulatory protein OTT_1378 (249 aa).

It belongs to the TACO1 family.

The protein localises to the cytoplasm. The chain is Probable transcriptional regulatory protein OTT_1378 from Orientia tsutsugamushi (strain Ikeda) (Rickettsia tsutsugamushi).